The primary structure comprises 186 residues: Large ribosomal subunit protein uL5c (186 aa).

This sequence belongs to the universal ribosomal protein uL5 family. As to quaternary structure, part of the 50S ribosomal subunit; contacts the 5S rRNA.

Its subcellular location is the plastid. The protein localises to the chloroplast. Binds 5S rRNA, forms part of the central protuberance of the 50S subunit. The chain is Large ribosomal subunit protein uL5c (rpl5) from Pleurastrum terricola (Filamentous green alga).